A 369-amino-acid polypeptide reads, in one-letter code: DNA replication and repair protein RecF (369 aa).

ATP is bound at residue 30-37 (GDNGSGKT).

Belongs to the RecF family.

It localises to the cytoplasm. In terms of biological role, the RecF protein is involved in DNA metabolism; it is required for DNA replication and normal SOS inducibility. RecF binds preferentially to single-stranded, linear DNA. It also seems to bind ATP. This Pseudomonas paraeruginosa (strain DSM 24068 / PA7) (Pseudomonas aeruginosa (strain PA7)) protein is DNA replication and repair protein RecF.